Consider the following 241-residue polypeptide: Ribonuclease PH (241 aa).

Residues R89 and 127 to 129 (GTR) contribute to the phosphate site.

It belongs to the RNase PH family. In terms of assembly, homohexameric ring arranged as a trimer of dimers.

It catalyses the reaction tRNA(n+1) + phosphate = tRNA(n) + a ribonucleoside 5'-diphosphate. Its function is as follows. Phosphorolytic 3'-5' exoribonuclease that plays an important role in tRNA 3'-end maturation. Removes nucleotide residues following the 3'-CCA terminus of tRNAs; can also add nucleotides to the ends of RNA molecules by using nucleoside diphosphates as substrates, but this may not be physiologically important. Probably plays a role in initiation of 16S rRNA degradation (leading to ribosome degradation) during starvation. In Xanthomonas oryzae pv. oryzae (strain MAFF 311018), this protein is Ribonuclease PH.